The following is a 1141-amino-acid chain: PR domain zinc finger protein 15 (1141 aa).

The 111-residue stretch at 49 to 159 folds into the SET domain; it reads PNLEIRRLED…PGTELRVWYA (111 aa). The C2H2-type 1 zinc finger occupies 197–219; that stretch reads WACKVCSATFLELQLLNEHLLGH. Positions 224–283 are disordered; it reads KSLPPGSQSEAAAPEKEQDTPRGEPPAVPESENVATKEQKKKPRRGRKPKVSKAEQPLVI. The segment covering 236 to 245 has biased composition (basic and acidic residues); sequence APEKEQDTPR. Residues 262 to 274 show a composition bias toward basic residues; that stretch reads QKKKPRRGRKPKV. 4 consecutive C2H2-type zinc fingers follow at residues 372 to 394, 399 to 422, 460 to 482, and 487 to 509; these read YQCN…VRSH, FKCE…SYKH, FQCE…KKKH, and FACE…QRRH. Lys517 is covalently cross-linked (Glycyl lysine isopeptide (Lys-Gly) (interchain with G-Cter in SUMO2)). 2 consecutive C2H2-type zinc fingers follow at residues 536–558 and 563–585; these read SGCP…LLTH and YTCE…IHVH. Residues 604-623 are disordered; sequence IGISSEENDDNSDESADSEP. Over residues 609–620 the composition is skewed to acidic residues; that stretch reads EENDDNSDESAD. 9 C2H2-type zinc fingers span residues 626 to 649, 654 to 676, 690 to 712, 718 to 740, 746 to 768, 774 to 796, 802 to 824, 830 to 853, and 859 to 882; these read YSCK…MEVH, YGCS…MVIH, HPCE…KLIH, HACE…MRVH, YLCA…MKLH, YECK…CKRH, FMCE…KLIH, WTCS…QLTH, and QSCQ…RRKH. Disordered stretches follow at residues 922 to 973 and 1108 to 1141; these read AEGK…DETN and QTDV…MYSY. Residues 927–938 are compositionally biased toward basic residues; sequence GKAAKRSHKRKQ. The span at 1121–1141 shows a compositional bias: low complexity; sequence PQQAAQPQVQAEQQQQQMYSY.

The protein belongs to the class V-like SAM-binding methyltransferase superfamily. As to expression, detected in all tissues examined.

It localises to the nucleus. In terms of biological role, sequence-specific DNA-binding transcriptional regulator. Plays a role as a molecular node in a transcriptional network regulating embryonic development and cell fate decision. Stimulates the expression of upstream key transcriptional activators and repressors of the Wnt/beta-catenin and MAPK/ERK pathways, respectively, that are essential for naive pluripotency and self-renewal maintenance of embryonic stem cells (ESCs). Specifically promotes SPRY1 and RSPO1 transcription activation through recognition and direct binding of a specific DNA sequence in their promoter regions. Involved in early embryo development. Also plays a role in induced pluripotent stem cells (iPSCs) reprogramming. This chain is PR domain zinc finger protein 15, found in Homo sapiens (Human).